Reading from the N-terminus, the 1500-residue chain is Carbamoyl-phosphate synthase [ammonia], mitochondrial (1500 aa).

Residues Met-1 to Leu-38 constitute a mitochondrion transit peptide. The segment at Leu-39–Thr-218 is anthranilate phosphoribosyltransferase homolog. N6-acetyllysine; alternate occurs at positions 55, 57, and 119. Lys-55 bears the N6-glutaryllysine; alternate mark. Residues Lys-55, Lys-57, and Lys-119 each carry the N6-succinyllysine; alternate modification. A Phosphoserine modification is found at Ser-148. N6-acetyllysine; alternate is present on residues Lys-157 and Lys-171. Lys-157 is subject to N6-succinyllysine; alternate. Residue Lys-171 is modified to N6-glutaryllysine; alternate. The residue at position 176 (Lys-176) is an N6-glutaryllysine. Lys-182 is modified (N6-acetyllysine). Ser-189 is subject to Phosphoserine. Residue Lys-197 is modified to N6-acetyllysine. N6-acetyllysine; alternate occurs at positions 207, 210, 214, 219, and 228. An N6-glutaryllysine; alternate mark is found at Lys-207, Lys-210, Lys-214, Lys-219, and Lys-228. Lys-207 bears the N6-succinyllysine; alternate mark. Residue Lys-214 is modified to N6-succinyllysine; alternate. Residues Lys-219–Thr-404 form the Glutamine amidotransferase type-1 domain. Residue Lys-237 is modified to N6-glutaryllysine. Lys-279 is modified (N6-acetyllysine). Residues Lys-280, Lys-287, Lys-307, and Lys-310 each carry the N6-acetyllysine; alternate modification. The residue at position 280 (Lys-280) is an N6-glutaryllysine; alternate. An N6-succinyllysine; alternate mark is found at Lys-287 and Lys-307. N6-glutaryllysine; alternate occurs at positions 307 and 310. Lys-400 carries the post-translational modification N6-succinyllysine. 4 positions are modified to N6-glutaryllysine; alternate: Lys-402, Lys-412, Lys-453, and Lys-458. Residues Lys-402 and Lys-412 each carry the N6-succinyllysine; alternate modification. N6-acetyllysine; alternate is present on residues Lys-412, Lys-453, Lys-458, Lys-522, Lys-527, and Lys-532. N6-succinyllysine; alternate occurs at positions 458, 522, and 527. N6-glutaryllysine; alternate occurs at positions 527 and 532. Position 537 is a phosphoserine; alternate (Ser-537). Ser-537 carries O-linked (GlcNAc) serine; alternate glycosylation. Phosphoserine is present on Ser-540. One can recognise an ATP-grasp 1 domain in the interval Ser-551–Leu-743. N6-acetyllysine; alternate occurs at positions 553 and 560. Lys-553 is subject to N6-glutaryllysine; alternate. N6-succinyllysine; alternate occurs at positions 553 and 560. Ser-569 is subject to Phosphoserine. N6-acetyllysine; alternate is present on residues Lys-575, Lys-603, and Lys-612. Lys-575, Lys-603, and Lys-612 each carry N6-succinyllysine; alternate. An N6-acetyllysine modification is found at Lys-630. Lys-728 carries the post-translational modification N6-glutaryllysine. Lys-751, Lys-757, Lys-772, Lys-793, Lys-811, Lys-831, Lys-841, and Lys-856 each carry N6-acetyllysine; alternate. An N6-succinyllysine; alternate mark is found at Lys-751 and Lys-757. N6-glutaryllysine; alternate is present on residues Lys-757, Lys-772, Lys-793, and Lys-811. Position 793 is an N6-succinyllysine; alternate (Lys-793). Residue Lys-831 is modified to N6-succinyllysine; alternate. N6-glutaryllysine; alternate is present on residues Lys-841 and Lys-856. The residue at position 869 (Lys-869) is an N6-glutaryllysine. Residues Lys-875, Lys-889, and Lys-892 each carry the N6-acetyllysine; alternate modification. Lys-875, Lys-889, and Lys-892 each carry N6-glutaryllysine; alternate. An N6-succinyllysine; alternate mark is found at Lys-875, Lys-889, and Lys-892. 2 positions are modified to phosphoserine: Ser-896 and Ser-898. Residues Lys-908, Lys-915, and Lys-919 each carry the N6-acetyllysine; alternate modification. 3 positions are modified to N6-glutaryllysine; alternate: Lys-908, Lys-915, and Lys-919. Residues Lys-915 and Lys-919 each carry the N6-succinyllysine; alternate modification. N6-acetyllysine is present on Lys-935. Ser-1036 carries the post-translational modification Phosphoserine. Residue Lys-1074 is modified to N6-acetyllysine; alternate. The residue at position 1074 (Lys-1074) is an N6-glutaryllysine; alternate. N6-succinyllysine; alternate is present on Lys-1074. Residues Ser-1079, Ser-1090, and Ser-1093 each carry the phosphoserine modification. One can recognise an ATP-grasp 2 domain in the interval Ser-1093 to Ile-1284. Lys-1100 is subject to N6-acetyllysine; alternate. Lys-1100 carries the N6-succinyllysine; alternate modification. Lys-1149 carries the N6-succinyllysine modification. 2 positions are modified to N6-acetyllysine; alternate: Lys-1168 and Lys-1183. 2 positions are modified to N6-glutaryllysine; alternate: Lys-1168 and Lys-1183. An N6-succinyllysine; alternate mark is found at Lys-1168 and Lys-1183. Ser-1203 carries the post-translational modification Phosphoserine. N6-acetyllysine is present on Lys-1222. At Lys-1224 the chain carries N6-glutaryllysine. Lys-1232, Lys-1269, and Lys-1291 each carry N6-acetyllysine; alternate. An N6-succinyllysine; alternate mark is found at Lys-1232, Lys-1269, and Lys-1291. O-linked (GlcNAc) serine glycosylation is present at Ser-1331. O-linked (GlcNAc) threonine glycosylation is present at Thr-1332. Residues Phe-1355–Ala-1500 enclose the MGS-like domain. An N6-acetyllysine; alternate modification is found at Lys-1356. An N6-glutaryllysine; alternate mark is found at Lys-1356 and Lys-1360. N6-succinyllysine; alternate occurs at positions 1356 and 1360. Residues Thr-1391, Thr-1394, and Trp-1410 each coordinate N-acetyl-L-glutamate. Residues Ser-1419 and Ser-1431 each carry the phosphoserine modification. N-acetyl-L-glutamate-binding residues include Asn-1437 and Asn-1440. An N6-acetyllysine; alternate modification is found at Lys-1444. Lys-1444 bears the N6-succinyllysine; alternate mark. N-acetyl-L-glutamate is bound at residue Asn-1449. Residues Lys-1471, Lys-1479, and Lys-1486 each carry the N6-acetyllysine; alternate modification. N6-succinyllysine; alternate occurs at positions 1471, 1479, and 1486. Residues Lys-1479 and Lys-1486 each carry the N6-glutaryllysine; alternate modification.

In terms of assembly, can form homooligomers (monomers as predominant form and dimers). In terms of processing, 50% of the mature protein that was isolated had Leu-39 as its N-terminal residue and 50% had Ser-40 suggesting two adjacent processing sites. However, the possibility of proteolytic removal of Leu-39 during the isolation of the enzyme cannot be excluded. Undergoes proteolytic cleavage in the C-terminal region corresponding to the loss of approximately 12 AA residues from the C-terminus. Post-translationally, succinylated at Lys-287 and Lys-1291. Desuccinylated at Lys-1291 by SIRT5, leading to activation. Glutarylated. Glutarylation levels increase during fasting. Deglutarylated by SIRT5 at Lys-55, Lys-219, Lys-412, Lys-889, Lys-892, Lys-915, Lys-1360 and Lys-1486, leading to activation. Primarily in the liver and small intestine.

The protein resides in the mitochondrion. Its subcellular location is the nucleus. It is found in the nucleolus. The protein localises to the cell membrane. It catalyses the reaction hydrogencarbonate + NH4(+) + 2 ATP = carbamoyl phosphate + 2 ADP + phosphate + 2 H(+). Requires N-acetyl-L-glutamate (NAG) as an allosteric activator. N-acetyl-L-beta-phenylglutamate (Phe-NAG) can also activate CPSase I, but with an activation constant that is 2-fold higher than that for NAG. Involved in the urea cycle of ureotelic animals where the enzyme plays an important role in removing excess ammonia from the cell. In Rattus norvegicus (Rat), this protein is Carbamoyl-phosphate synthase [ammonia], mitochondrial (Cps1).